The sequence spans 140 residues: Fluoride-specific ion channel FluC 1 (140 aa).

4 helical membrane passes run 3 to 23, 38 to 58, 80 to 100, and 113 to 133; these read TGATLIELLAVALGGGTGAAA, APLWSLAVVNLLGTVVLGLVL, ILYPLLGIGLAGGFTTFSTVM, and IAGVVGMAVVCCAVFLPALWC. Na(+) contacts are provided by Gly91 and Thr94.

Belongs to the fluoride channel Fluc/FEX (TC 1.A.43) family.

The protein resides in the cell membrane. It catalyses the reaction fluoride(in) = fluoride(out). With respect to regulation, na(+) is not transported, but it plays an essential structural role and its presence is essential for fluoride channel function. Fluoride-specific ion channel. Important for reducing fluoride concentration in the cell, thus reducing its toxicity. This chain is Fluoride-specific ion channel FluC 1, found in Corynebacterium jeikeium (strain K411).